The primary structure comprises 336 residues: GTPase Obg (336 aa).

Positions 1-159 constitute an Obg domain; that stretch reads MKFIDEATII…RRLQLELILL (159 aa). The OBG-type G domain occupies 160 to 333; the sequence is ADVGLLGLPN…LCRDIMLFIN (174 aa). GTP-binding positions include 166–173, 191–195, 213–216, 283–286, and 314–316; these read GLPNVGKS, FTTLV, DIPG, NKLD, and SAM. Ser-173 and Thr-193 together coordinate Mg(2+).

Belongs to the TRAFAC class OBG-HflX-like GTPase superfamily. OBG GTPase family. Monomer. Requires Mg(2+) as cofactor.

Its subcellular location is the cytoplasm. Its function is as follows. An essential GTPase which binds GTP, GDP and possibly (p)ppGpp with moderate affinity, with high nucleotide exchange rates and a fairly low GTP hydrolysis rate. Plays a role in control of the cell cycle, stress response, ribosome biogenesis and in those bacteria that undergo differentiation, in morphogenesis control. This chain is GTPase Obg, found in Baumannia cicadellinicola subsp. Homalodisca coagulata.